Here is a 269-residue protein sequence, read N- to C-terminus: Regulating synaptic membrane exocytosis protein 4 (269 aa).

Residues P115–Y233 enclose the C2 domain. A phosphoserine mark is found at S254 and S257.

In terms of assembly, binds PPFIA3. Does not bind RAB3.

The protein resides in the synapse. Its function is as follows. Regulates synaptic membrane exocytosis. This is Regulating synaptic membrane exocytosis protein 4 (Rims4) from Mus musculus (Mouse).